Here is a 103-residue protein sequence, read N- to C-terminus: Pyrimidine/purine nucleoside phosphorylase (103 aa).

It belongs to the nucleoside phosphorylase PpnP family.

The enzyme catalyses a purine D-ribonucleoside + phosphate = a purine nucleobase + alpha-D-ribose 1-phosphate. It carries out the reaction adenosine + phosphate = alpha-D-ribose 1-phosphate + adenine. It catalyses the reaction cytidine + phosphate = cytosine + alpha-D-ribose 1-phosphate. The catalysed reaction is guanosine + phosphate = alpha-D-ribose 1-phosphate + guanine. The enzyme catalyses inosine + phosphate = alpha-D-ribose 1-phosphate + hypoxanthine. It carries out the reaction thymidine + phosphate = 2-deoxy-alpha-D-ribose 1-phosphate + thymine. It catalyses the reaction uridine + phosphate = alpha-D-ribose 1-phosphate + uracil. The catalysed reaction is xanthosine + phosphate = alpha-D-ribose 1-phosphate + xanthine. Functionally, catalyzes the phosphorolysis of diverse nucleosides, yielding D-ribose 1-phosphate and the respective free bases. Can use uridine, adenosine, guanosine, cytidine, thymidine, inosine and xanthosine as substrates. Also catalyzes the reverse reactions. This is Pyrimidine/purine nucleoside phosphorylase from Nocardia farcinica (strain IFM 10152).